A 107-amino-acid polypeptide reads, in one-letter code: UPF0145 protein YbjQ (107 aa).

The protein belongs to the UPF0145 family.

The polypeptide is UPF0145 protein YbjQ (Salmonella gallinarum (strain 287/91 / NCTC 13346)).